Reading from the N-terminus, the 307-residue chain is Methionyl-tRNA formyltransferase (307 aa).

110–113 (SLLP) contributes to the (6S)-5,6,7,8-tetrahydrofolate binding site.

This sequence belongs to the Fmt family.

It carries out the reaction L-methionyl-tRNA(fMet) + (6R)-10-formyltetrahydrofolate = N-formyl-L-methionyl-tRNA(fMet) + (6S)-5,6,7,8-tetrahydrofolate + H(+). Functionally, attaches a formyl group to the free amino group of methionyl-tRNA(fMet). The formyl group appears to play a dual role in the initiator identity of N-formylmethionyl-tRNA by promoting its recognition by IF2 and preventing the misappropriation of this tRNA by the elongation apparatus. This chain is Methionyl-tRNA formyltransferase, found in Chromobacterium violaceum (strain ATCC 12472 / DSM 30191 / JCM 1249 / CCUG 213 / NBRC 12614 / NCIMB 9131 / NCTC 9757 / MK).